An 892-amino-acid chain; its full sequence is Protein translocase subunit SecA (892 aa).

ATP contacts are provided by residues Gln89, 107-111 (GEGKT), and Asp517. Positions 879, 881, 890, and 891 each coordinate Zn(2+).

This sequence belongs to the SecA family. Monomer and homodimer. Part of the essential Sec protein translocation apparatus which comprises SecA, SecYEG and auxiliary proteins SecDF-YajC and YidC. Requires Zn(2+) as cofactor.

It is found in the cell inner membrane. It localises to the cytoplasm. It catalyses the reaction ATP + H2O + cellular proteinSide 1 = ADP + phosphate + cellular proteinSide 2.. Its function is as follows. Part of the Sec protein translocase complex. Interacts with the SecYEG preprotein conducting channel. Has a central role in coupling the hydrolysis of ATP to the transfer of proteins into and across the cell membrane, serving as an ATP-driven molecular motor driving the stepwise translocation of polypeptide chains across the membrane. The chain is Protein translocase subunit SecA from Ruthia magnifica subsp. Calyptogena magnifica.